A 541-amino-acid chain; its full sequence is Chaperonin GroEL (541 aa).

Residues 29–32, 86–90, Gly-413, 478–480, and Asp-494 contribute to the ATP site; these read TIGP, DGTTT, and NAA.

The protein belongs to the chaperonin (HSP60) family. In terms of assembly, forms a cylinder of 14 subunits composed of two heptameric rings stacked back-to-back. Interacts with the co-chaperonin GroES.

Its subcellular location is the cytoplasm. The catalysed reaction is ATP + H2O + a folded polypeptide = ADP + phosphate + an unfolded polypeptide.. Its function is as follows. Together with its co-chaperonin GroES, plays an essential role in assisting protein folding. The GroEL-GroES system forms a nano-cage that allows encapsulation of the non-native substrate proteins and provides a physical environment optimized to promote and accelerate protein folding. The polypeptide is Chaperonin GroEL (Oenococcus oeni (strain ATCC BAA-331 / PSU-1)).